A 254-amino-acid polypeptide reads, in one-letter code: rRNA N-glycosylase sapovaccarin-S2 (254 aa).

Belongs to the ribosome-inactivating protein family. Type 1 RIP subfamily. Expressed in seeds; most abundant in the perisperm.

The enzyme catalyses Endohydrolysis of the N-glycosidic bond at one specific adenosine on the 28S rRNA.. In terms of biological role, exhibits N-glycosylase activity. Catalyzes the release of one adenine from a ribosome. Acts as a ribosome-inactivating protein and inhibits protein synthesis. Induces cell death in Huh-7 liver cells. May contribute to the protection against plant pests and predators or play a role in regulating the death of plant cells. In Gypsophila vaccaria (Cow soapwort), this protein is rRNA N-glycosylase sapovaccarin-S2.